Reading from the N-terminus, the 1020-residue chain is Calcium-transporting ATPase sarcoplasmic/endoplasmic reticulum type (1020 aa).

Over methionine 1–serine 48 the chain is Cytoplasmic. Residues isoleucine 49–alanine 69 form a helical membrane-spanning segment. Over isoleucine 70 to valine 89 the chain is Lumenal. Residues glutamate 90 to arginine 110 traverse the membrane as a helical segment. Residues asparagine 111–leucine 253 lie on the Cytoplasmic side of the membrane. Position 240 is a phosphoserine (serine 240). Residues aspartate 254–alanine 273 traverse the membrane as a helical segment. The Lumenal portion of the chain corresponds to isoleucine 274–tyrosine 295. The chain crosses the membrane as a helical span at residues phenylalanine 296 to alanine 313. Ca(2+)-binding residues include valine 304, alanine 305, isoleucine 307, and glutamate 309. Topologically, residues valine 314–methionine 757 are cytoplasmic. The active-site 4-aspartylphosphate intermediate is the aspartate 351. 2 residues coordinate Mg(2+): aspartate 703 and aspartate 707. Residues lysine 758 to leucine 777 form a helical membrane-spanning segment. The Ca(2+) site is built by asparagine 768 and glutamate 771. Residues threonine 778 to leucine 787 lie on the Lumenal side of the membrane. A helical transmembrane segment spans residues isoleucine 788 to glycine 808. 3 residues coordinate Ca(2+): asparagine 796, threonine 799, and aspartate 800. Residues phenylalanine 809–leucine 828 lie on the Cytoplasmic side of the membrane. Residues isoleucine 829–alanine 851 form a helical membrane-spanning segment. Topologically, residues alanine 852–methionine 897 are lumenal. The chain crosses the membrane as a helical span at residues threonine 898–serine 917. Residue glutamate 908 coordinates Ca(2+). At glutamate 918 to asparagine 930 the chain is on the cytoplasmic side. The chain crosses the membrane as a helical span at residues leucine 931 to tyrosine 949. The Lumenal portion of the chain corresponds to valine 950–alanine 964. A helical membrane pass occupies residues glutamate 965–lysine 985. The Cytoplasmic segment spans residues phenylalanine 986–leucine 1020.

The protein belongs to the cation transport ATPase (P-type) (TC 3.A.3) family. As to quaternary structure, interacts with SclA and SclB.

Its subcellular location is the endoplasmic reticulum membrane. The protein localises to the sarcoplasmic reticulum membrane. The enzyme catalyses Ca(2+)(in) + ATP + H2O = Ca(2+)(out) + ADP + phosphate + H(+). Functionally, this magnesium-dependent enzyme catalyzes the hydrolysis of ATP coupled with the transport of calcium. The polypeptide is Calcium-transporting ATPase sarcoplasmic/endoplasmic reticulum type (Drosophila melanogaster (Fruit fly)).